Reading from the N-terminus, the 309-residue chain is Spermatid maturation protein 1 (309 aa).

Residues 29-49 (VLLLLGLIICINISINIVTLL) form a helical membrane-spanning segment. The interval 209-231 (PPPPSPEAPSHKNGGEGAVPEAE) is disordered. The stretch at 259 to 285 (RIVYDARDMRRRLRELTREVEALSGCY) forms a coiled coil.

The protein resides in the membrane. It is found in the cytoplasm. Functionally, required for proper cytoplasm removal during spermatogenesis. This chain is Spermatid maturation protein 1 (SPEM1), found in Homo sapiens (Human).